The following is a 107-amino-acid chain: ATP synthase peripheral stalk subunit F6, mitochondrial (107 aa).

The transit peptide at 1–31 directs the protein to the mitochondrion; that stretch reads MILQRLFRFSVIRSAVSVYLRRNIGVTAVAF. An N6-acetyllysine mark is found at K40, K45, and K78. N6-acetyllysine; alternate occurs at positions 93 and 98. K93 and K98 each carry N6-succinyllysine; alternate. K104 bears the N6-acetyllysine mark.

Belongs to the eukaryotic ATPase subunit F6 family. As to quaternary structure, component of the ATP synthase complex composed at least of ATP5F1A/subunit alpha, ATP5F1B/subunit beta, ATP5MC1/subunit c (homooctomer), MT-ATP6/subunit a, MT-ATP8/subunit 8, ATP5ME/subunit e, ATP5MF/subunit f, ATP5MG/subunit g, ATP5MK/subunit k, ATP5MJ/subunit j, ATP5F1C/subunit gamma, ATP5F1D/subunit delta, ATP5F1E/subunit epsilon, ATP5PF/subunit F6, ATP5PB/subunit b, ATP5PD/subunit d, ATP5PO/subunit OSCP. ATP synthase complex consists of a soluble F(1) head domain (subunits alpha(3) and beta(3)) - the catalytic core - and a membrane F(0) domain - the membrane proton channel (subunits c, a, 8, e, f, g, k and j). These two domains are linked by a central stalk (subunits gamma, delta, and epsilon) rotating inside the F1 region and a stationary peripheral stalk (subunits F6, b, d, and OSCP).

It is found in the mitochondrion. The protein localises to the mitochondrion inner membrane. In terms of biological role, subunit F6, of the mitochondrial membrane ATP synthase complex (F(1)F(0) ATP synthase or Complex V) that produces ATP from ADP in the presence of a proton gradient across the membrane which is generated by electron transport complexes of the respiratory chain. ATP synthase complex consist of a soluble F(1) head domain - the catalytic core - and a membrane F(1) domain - the membrane proton channel. These two domains are linked by a central stalk rotating inside the F(1) region and a stationary peripheral stalk. During catalysis, ATP synthesis in the catalytic domain of F(1) is coupled via a rotary mechanism of the central stalk subunits to proton translocation. In vivo, can only synthesize ATP although its ATP hydrolase activity can be activated artificially in vitro. Part of the complex F(0) domain. Part of the complex F(0) domain and the peripheric stalk, which acts as a stator to hold the catalytic alpha(3)beta(3) subcomplex and subunit a/ATP6 static relative to the rotary elements. The protein is ATP synthase peripheral stalk subunit F6, mitochondrial of Pongo abelii (Sumatran orangutan).